A 259-amino-acid polypeptide reads, in one-letter code: HTH-type transcriptional regulator Rv1931c (259 aa).

Basic residues predominate over residues 104–121 (SHRRHRPRAGTGRRRPRH). The segment at 104-170 (SHRRHRPRAG…GAGGHRGRAG (67 aa)) is disordered. The HTH araC/xylS-type domain occupies 174–257 (RIGELAQRAA…GISPDQYRKA (84 aa)). 2 consecutive DNA-binding regions (H-T-H motif) follow at residues 176–197 (GELA…SDEV) and 224–247 (VVAI…IRRV).

In terms of biological role, controls the expression of genes important for virulence. The polypeptide is HTH-type transcriptional regulator Rv1931c (Mycobacterium tuberculosis (strain ATCC 25618 / H37Rv)).